A 137-amino-acid chain; its full sequence is SPbeta prophage-derived uncharacterized protein YoqU (137 aa).

This Bacillus subtilis (strain 168) protein is SPbeta prophage-derived uncharacterized protein YoqU (yoqU).